The chain runs to 190 residues: Peptidyl-tRNA hydrolase (190 aa).

Tyrosine 14 contributes to the tRNA binding site. The Proton acceptor role is filled by histidine 19. Tyrosine 64, asparagine 66, and asparagine 112 together coordinate tRNA.

It belongs to the PTH family. As to quaternary structure, monomer.

The protein localises to the cytoplasm. It catalyses the reaction an N-acyl-L-alpha-aminoacyl-tRNA + H2O = an N-acyl-L-amino acid + a tRNA + H(+). In terms of biological role, hydrolyzes ribosome-free peptidyl-tRNAs (with 1 or more amino acids incorporated), which drop off the ribosome during protein synthesis, or as a result of ribosome stalling. Its function is as follows. Catalyzes the release of premature peptidyl moieties from peptidyl-tRNA molecules trapped in stalled 50S ribosomal subunits, and thus maintains levels of free tRNAs and 50S ribosomes. The sequence is that of Peptidyl-tRNA hydrolase from Pelodictyon phaeoclathratiforme (strain DSM 5477 / BU-1).